A 207-amino-acid polypeptide reads, in one-letter code: MANILHIDSSPRGDRSISRKLSYEFITSWKDTHPGDTVTYRDLGHNPVPHVDEPWIAAAFSSPESHTPELKTAIELSDTLIDEFLAADRLVFGVPMYNLNIPSTFKAYIDQIVRAGKTFTVDANGYKGLVDSSKKVLIITSRGGSYPPGTPYAAYDYQEPYLRAILGFMGLTDVTFIHAESLNMGEDAREKSLAGAKDAIAQAVANW.

Residues S10, S16–S18, M96–L99, and S141–G144 each bind FMN.

It belongs to the azoreductase type 1 family. In terms of assembly, homodimer. The cofactor is FMN.

It carries out the reaction 2 a quinone + NADH + H(+) = 2 a 1,4-benzosemiquinone + NAD(+). The enzyme catalyses N,N-dimethyl-1,4-phenylenediamine + anthranilate + 2 NAD(+) = 2-(4-dimethylaminophenyl)diazenylbenzoate + 2 NADH + 2 H(+). In terms of biological role, quinone reductase that provides resistance to thiol-specific stress caused by electrophilic quinones. Its function is as follows. Also exhibits azoreductase activity. Catalyzes the reductive cleavage of the azo bond in aromatic azo compounds to the corresponding amines. This chain is FMN-dependent NADH:quinone oxidoreductase, found in Nostoc sp. (strain PCC 7120 / SAG 25.82 / UTEX 2576).